Consider the following 683-residue polypeptide: Acetyl-coenzyme A synthetase 2 (683 aa).

CoA contacts are provided by residues 207–210 (RGGK) and T326. ATP is bound by residues 402 to 404 (GEP), 426 to 431 (DTFWQT), D517, and R532. S540 contributes to the CoA binding site. R543 is an ATP binding site. Residue R613 coordinates CoA.

Belongs to the ATP-dependent AMP-binding enzyme family.

It catalyses the reaction acetate + ATP + CoA = acetyl-CoA + AMP + diphosphate. The sequence is that of Acetyl-coenzyme A synthetase 2 (ACS2) from Candida glabrata (strain ATCC 2001 / BCRC 20586 / JCM 3761 / NBRC 0622 / NRRL Y-65 / CBS 138) (Yeast).